The primary structure comprises 97 residues: MKIGVVYALPSRQSWLSIDVPEGTTVKEAIQKSGILNQFPEIDLETQKVGIFGKAAALDAVVEEGARIEIYRPITVDPKTVKRRAAPEAPAAGGTES.

This sequence belongs to the UPF0125 (RnfH) family.

The sequence is that of Protein RnfH from Paramagnetospirillum magneticum (strain ATCC 700264 / AMB-1) (Magnetospirillum magneticum).